Reading from the N-terminus, the 306-residue chain is 2-dehydro-3-deoxy-D-gluconate/2-dehydro-3-deoxy-phosphogluconate aldolase (306 aa).

Substrate is bound by residues 61-62 (TT), 148-150 (YNY), and 173-175 (KDT). The active-site Schiff-base intermediate with substrate is K173.

Belongs to the DapA family. KDPG aldolase subfamily. In terms of assembly, homotetramer; dimer of dimers.

It catalyses the reaction 2-dehydro-3-deoxy-6-phospho-D-gluconate = D-glyceraldehyde 3-phosphate + pyruvate. It carries out the reaction 2-dehydro-3-deoxy-D-gluconate = D-glyceraldehyde + pyruvate. Its pathway is carbohydrate acid metabolism; 2-dehydro-3-deoxy-D-gluconate degradation; D-glyceraldehyde 3-phosphate and pyruvate from 2-dehydro-3-deoxy-D-gluconate: step 2/2. Functionally, involved in the degradation of glucose via the Entner-Doudoroff pathway. Catalyzes the reversible cleavage of 2-keto-3-deoxy-6-phosphogluconate (KDPG) and 2-keto-3-deoxygluconate (KDG) forming pyruvate and glyceraldehyde 3-phosphate or glyceraldehyde, respectively. It is not able to use 2-keto-3-deoxy-6-phosphogalactonate (KDPGal) and 2-keto-3-deoxygalactonate (KDGal) as substrate. This Thermoproteus tenax protein is 2-dehydro-3-deoxy-D-gluconate/2-dehydro-3-deoxy-phosphogluconate aldolase (kdgA).